The following is a 693-amino-acid chain: tRNA (guanine(27)-N(2))-dimethyltransferase (693 aa).

Residues 95 to 99 (HKLRR) carry the Nucleolar localization signal motif. The segment at 144–166 (YHCIICSATITRRTDMLGHVRRH) adopts a C2H2-type zinc-finger fold. The Trm1 methyltransferase domain maps to 187-648 (EILKEADTDV…APLMQFKSIL (462 aa)). Positions 220, 267, 317, and 318 each coordinate S-adenosyl-L-methionine. Zn(2+)-binding residues include cysteine 448, cysteine 451, cysteine 473, and cysteine 475. Residue lysine 545 forms a Glycyl lysine isopeptide (Lys-Gly) (interchain with G-Cter in SUMO2) linkage. 2 positions are modified to phosphoserine: serine 572 and serine 667.

Belongs to the class I-like SAM-binding methyltransferase superfamily. Trm1 family.

It is found in the nucleus. The protein resides in the nucleolus. The catalysed reaction is guanosine(27) in tRNA(Tyr) + 2 S-adenosyl-L-methionine = N(2)-dimethylguanosine(27) in tRNA(Tyr) + 2 S-adenosyl-L-homocysteine + 2 H(+). Specifically dimethylates a single guanine residue at position 27 of tRNA(Tyr) using S-adenosyl-L-methionine as donor of the methyl groups. Dimethylation at position 27 of tRNA(Tyr) is required for efficient translation of tyrosine codons. Also required to maintain 3-(3-amino-3-carboxypropyl)uridine (acp3U) in the D-loop of several cytoplasmic tRNAs. The chain is tRNA (guanine(27)-N(2))-dimethyltransferase (TRMT1L) from Macaca fascicularis (Crab-eating macaque).